Consider the following 179-residue polypeptide: Large ribosomal subunit protein uL5 (179 aa).

The protein belongs to the universal ribosomal protein uL5 family. In terms of assembly, part of the 50S ribosomal subunit; part of the 5S rRNA/L5/L18/L25 subcomplex. Contacts the 5S rRNA and the P site tRNA. Forms a bridge to the 30S subunit in the 70S ribosome.

Functionally, this is one of the proteins that bind and probably mediate the attachment of the 5S RNA into the large ribosomal subunit, where it forms part of the central protuberance. In the 70S ribosome it contacts protein S13 of the 30S subunit (bridge B1b), connecting the 2 subunits; this bridge is implicated in subunit movement. Contacts the P site tRNA; the 5S rRNA and some of its associated proteins might help stabilize positioning of ribosome-bound tRNAs. The protein is Large ribosomal subunit protein uL5 of Polaromonas naphthalenivorans (strain CJ2).